A 76-amino-acid chain; its full sequence is Putative membrane protein insertion efficiency factor (76 aa).

Belongs to the UPF0161 family.

The protein resides in the cell inner membrane. Could be involved in insertion of integral membrane proteins into the membrane. This chain is Putative membrane protein insertion efficiency factor, found in Porphyromonas gingivalis (strain ATCC 33277 / DSM 20709 / CIP 103683 / JCM 12257 / NCTC 11834 / 2561).